Here is a 562-residue protein sequence, read N- to C-terminus: Formate--tetrahydrofolate ligase (562 aa).

71–78 (TPAGEGKS) serves as a coordination point for ATP.

It belongs to the formate--tetrahydrofolate ligase family.

The enzyme catalyses (6S)-5,6,7,8-tetrahydrofolate + formate + ATP = (6R)-10-formyltetrahydrofolate + ADP + phosphate. It functions in the pathway one-carbon metabolism; tetrahydrofolate interconversion. In Bacillus cereus (strain AH187), this protein is Formate--tetrahydrofolate ligase.